Here is a 435-residue protein sequence, read N- to C-terminus: FAD-dependent monooxygenase ATEG_07662 (435 aa).

Residues 8–28 (PLDVAIIGGGIIGIMTALGLL) form a helical membrane-spanning segment. Glutamate 38, alanine 51, and arginine 119 together coordinate FAD. A glycan (N-linked (GlcNAc...) asparagine) is linked at asparagine 191. Arginine 201 is a catalytic residue. Residues aspartate 317 and alanine 330 each contribute to the FAD site.

This sequence belongs to the paxM FAD-dependent monooxygenase family. Requires FAD as cofactor.

Its subcellular location is the membrane. The protein operates within secondary metabolite biosynthesis. Functionally, FAD-dependent monooxygenase; part of the cluster B that mediates the biosynthesis of azasperpyranones, members of the azaphilone family that exhibit anti-cancer activities. Azasperpyranones are synthesized by 2 clusters, A and B. Cluster A is responsible for the production of the polyhydric phenol moiety while the azaphilonoid scaffold is produced by the cluster B. The non-reducing polyketide synthase ATEG_03629 produces 5-methyl orsellinic acid, which is then reduced to 5-methyl orsellinic aldehyde by the NRPS-like protein ATEG_03630. 5-methyl orsellinic aldehyde is then first hydroxylated by the FAD-dependent monooxygenase ATEG_03635 and subsequently hydroxylated by the cytochrome P450 monooxygenase ATEG_03631 to produce the unstable polyhydric phenol precursor of azasperpyranones. On the other hand, the polyketide synthase ATEG_07659 is responsible for producing the 3,5-dimethyloctadienone moiety from acetyl-CoA, three malonyl-CoA, and two S-adenosyl methionines (SAM). The 3,5-dimethyloctadienone moiety is then loaded onto the SAT domain of ATEG_07661 and extended with four malonyl-CoA and one SAM, which leads to the formation of 2,4-dihydroxy-6-(5,7-dimethyl-2-oxo-trans-3-trans-5-nonadienyl)-3-methylbenzaldehyde (compound 8) after reductive release and aldol condensation. The FAD-dependent monooxygenase ATEG_07662 is the next enzyme in the biosynthesis sequence and hydroxylates the side chain at the benzylic position of compound 8. In Aspergillus nidulans, afoF, the ortholog of the FAD-dependent oxygenase ATEG_07660, is the key enzyme for the biosynthesis of asperfuranone by catalyzing the hydroxylation at C-8 of to prevent the formation of a six-membered ring hemiacetal intermediate and thus facilitating the formation of a five-membered ring to produce asperfuranone. In Aspergillus terreus, ATEG_07660 is probably not functional, which leads to the formation of the six-membered ring hemiacetal intermediate presperpyranone instead of asperfuranone. Finally, ATEG_03636 is involved in the condensation of the polyhydric phenol moiety produced by cluster A and the perasperpyranone precursor produced by cluster B, to yield azasperpyranone A. Further modifications of azasperpyranone A result in the production of derivatives, including azasperpyranone B to F. In Aspergillus terreus (strain NIH 2624 / FGSC A1156), this protein is FAD-dependent monooxygenase ATEG_07662.